The following is a 359-amino-acid chain: Phospho-N-acetylmuramoyl-pentapeptide-transferase (359 aa).

Helical transmembrane passes span 26 to 46 (TIYGGLTAFLICFLLGPWVIN), 73 to 93 (TMGGILILFSLGVSTLLWADL), 98 to 118 (ILITLLSMLLFGAIGFIDDYL), 134 to 154 (FLVQIMAGLVISYLVYLCPDF), 166 to 186 (FTPDLGIWYIPFATLVIVGTS), 197 to 217 (GLAIGPIIIAGVTYMIFAYVA), 234 to 254 (CGEITIVCGILAGAGLGFLWF), 261 to 281 (VFMGDTGSIPLGAILGTIAVI), 286 to 306 (ILLLVVGGLFVIEALSVIIQV), and 338 to 358 (IVRFWIIAITLALISLSTLKI).

It belongs to the glycosyltransferase 4 family. MraY subfamily. Requires Mg(2+) as cofactor.

It is found in the cell inner membrane. It carries out the reaction UDP-N-acetyl-alpha-D-muramoyl-L-alanyl-gamma-D-glutamyl-meso-2,6-diaminopimeloyl-D-alanyl-D-alanine + di-trans,octa-cis-undecaprenyl phosphate = di-trans,octa-cis-undecaprenyl diphospho-N-acetyl-alpha-D-muramoyl-L-alanyl-D-glutamyl-meso-2,6-diaminopimeloyl-D-alanyl-D-alanine + UMP. Its pathway is cell wall biogenesis; peptidoglycan biosynthesis. Functionally, catalyzes the initial step of the lipid cycle reactions in the biosynthesis of the cell wall peptidoglycan: transfers peptidoglycan precursor phospho-MurNAc-pentapeptide from UDP-MurNAc-pentapeptide onto the lipid carrier undecaprenyl phosphate, yielding undecaprenyl-pyrophosphoryl-MurNAc-pentapeptide, known as lipid I. This is Phospho-N-acetylmuramoyl-pentapeptide-transferase from Desulforapulum autotrophicum (strain ATCC 43914 / DSM 3382 / VKM B-1955 / HRM2) (Desulfobacterium autotrophicum).